Here is a 252-residue protein sequence, read N- to C-terminus: uncharacterized protein (252 aa).

The 143-residue stretch at Phe-96–Ala-238 folds into the Clp R domain. Repeat stretches follow at residues Phe-99 to Thr-164 and Phe-172 to Ala-238.

This sequence belongs to the ClpA/ClpB family. ClpC subfamily.

This is an uncharacterized protein from Mycobacterium bovis (strain ATCC BAA-935 / AF2122/97).